A 335-amino-acid polypeptide reads, in one-letter code: 1D-myo-inositol 2-acetamido-2-deoxy-alpha-D-glucopyranoside deacetylase (335 aa).

Residues H19, D22, and H158 each coordinate Zn(2+).

Belongs to the MshB deacetylase family. Zn(2+) is required as a cofactor.

It catalyses the reaction 1D-myo-inositol 2-acetamido-2-deoxy-alpha-D-glucopyranoside + H2O = 1D-myo-inositol 2-amino-2-deoxy-alpha-D-glucopyranoside + acetate. Functionally, catalyzes the deacetylation of 1D-myo-inositol 2-acetamido-2-deoxy-alpha-D-glucopyranoside (GlcNAc-Ins) in the mycothiol biosynthesis pathway. In Corynebacterium urealyticum (strain ATCC 43042 / DSM 7109), this protein is 1D-myo-inositol 2-acetamido-2-deoxy-alpha-D-glucopyranoside deacetylase.